The following is a 529-amino-acid chain: Interleukin-21 receptor (529 aa).

The signal sequence occupies residues 1–19 (MPRGPVAALLLLILHGAWS). Cystine bridges form between C20-C109, C25-C35, and C65-C81. Residues 20-237 (CLDLTCYTDY…GEPEAGWDPH (218 aa)) lie on the Extracellular side of the membrane. Fibronectin type-III domains follow at residues 21–118 (LDLT…AESI) and 119–228 (KPAP…TQAG). Residues N73, N97, N104, N125, and N182 are each glycosylated (N-linked (GlcNAc...) asparagine). A glycan (C-linked (Man) tryptophan) is linked at W214. The WSXWS motif motif lies at 214–218 (WSEWS). Residues 238–258 (MLLLLAVLIIVLVFMGLKIHL) traverse the membrane as a helical segment. The Cytoplasmic segment spans residues 259 to 529 (PWRLWKKIWA…PPVDSGAQSS (271 aa)). A Box 1 motif motif is present at residues 266–274 (IWAPVPTPE). A disordered region spans residues 458–529 (TADPTWRTGS…PPVDSGAQSS (72 aa)).

It belongs to the type I cytokine receptor family. Type 4 subfamily. Heterodimer with the common gamma subunit. Associates with JAK1. In terms of processing, C-mannosylated at Trp-214 in the WSXWS motif, the sugar chain makes extensive hydrogen bonds with Asn-73 sugar, and bridges the two fibronectin domains transforming the V-shaped receptor into an A-frame. Selectively expressed in lymphoid tissues. Most highly expressed in thymus and spleen.

It is found in the membrane. This is a receptor for interleukin-21. This is Interleukin-21 receptor (Il21r) from Mus musculus (Mouse).